The chain runs to 421 residues: CinA-like protein (421 aa).

It belongs to the CinA family.

The polypeptide is CinA-like protein (Synechococcus sp. (strain ATCC 27144 / PCC 6301 / SAUG 1402/1) (Anacystis nidulans)).